A 110-amino-acid polypeptide reads, in one-letter code: Large ribosomal subunit protein uL22 (110 aa).

This sequence belongs to the universal ribosomal protein uL22 family. Part of the 50S ribosomal subunit.

Functionally, this protein binds specifically to 23S rRNA; its binding is stimulated by other ribosomal proteins, e.g. L4, L17, and L20. It is important during the early stages of 50S assembly. It makes multiple contacts with different domains of the 23S rRNA in the assembled 50S subunit and ribosome. The globular domain of the protein is located near the polypeptide exit tunnel on the outside of the subunit, while an extended beta-hairpin is found that lines the wall of the exit tunnel in the center of the 70S ribosome. This is Large ribosomal subunit protein uL22 from Dichelobacter nodosus (strain VCS1703A).